The chain runs to 303 residues: Porphobilinogen deaminase (303 aa).

Cys-240 carries the post-translational modification S-(dipyrrolylmethanemethyl)cysteine.

The protein belongs to the HMBS family. Monomer. Dipyrromethane is required as a cofactor.

It carries out the reaction 4 porphobilinogen + H2O = hydroxymethylbilane + 4 NH4(+). It functions in the pathway porphyrin-containing compound metabolism; protoporphyrin-IX biosynthesis; coproporphyrinogen-III from 5-aminolevulinate: step 2/4. Its function is as follows. Tetrapolymerization of the monopyrrole PBG into the hydroxymethylbilane pre-uroporphyrinogen in several discrete steps. This Stenotrophomonas maltophilia (strain R551-3) protein is Porphobilinogen deaminase.